The sequence spans 454 residues: Growth/differentiation factor 9 (454 aa).

Residues 1–24 (MARPNKFLLWFCCFAWLCFPISLG) form the signal peptide. The propeptide occupies 25 to 319 (SQASGGEAQI…GRSSHHRHRR (295 aa)). N-linked (GlcNAc...) asparagine glycans are attached at residues Asn-106, Asn-163, Asn-236, Asn-255, and Asn-268. Residues 303-330 (GEEAAEDGRSSHHRHRRGQETVSSELKK) are disordered. Ser-325 is subject to Phosphoserine; by CK. Asn-338 carries an N-linked (GlcNAc...) asparagine glycan. Disulfide bonds link Cys-353/Cys-419, Cys-382/Cys-451, and Cys-386/Cys-453.

It belongs to the TGF-beta family. In terms of assembly, homodimer or heterodimer (Potential). But, in contrast to other members of this family, cannot be disulfide-linked. Post-translationally, phosphorylated; phosphorylation is critical for GDF9 function. In vitro, can be phosphorylated by CK at Ser-325. Expressed in ovarian granulosa cells. Present in oocytes of primary follicles (at protein level).

It is found in the secreted. Its function is as follows. Required for ovarian folliculogenesis. Promotes primordial follicle development. Stimulates granulosa cell proliferation. Promotes cell transition from G0/G1 to S and G2/M phases, through an increase of CCND1 and CCNE1 expression, and RB1 phosphorylation. It regulates STAR expression and cAMP-dependent progesterone release in granulosa and thecal cells. Attenuates the suppressive effects of activin A on STAR expression and progesterone production by increasing the expression of inhibin B. It suppresses FST and FSTL3 production in granulosa-lutein cells. This is Growth/differentiation factor 9 (GDF9) from Homo sapiens (Human).